The following is a 683-amino-acid chain: Dipeptidyl-peptidase 5 (683 aa).

The N-terminal stretch at 1 to 19 is a signal peptide; that stretch reads MHSLFKQLVFFLVMTLTAA. N-linked (GlcNAc...) asparagine glycosylation is found at asparagine 53, asparagine 69, asparagine 103, asparagine 116, asparagine 126, and asparagine 400. Residues serine 535, aspartate 617, and histidine 649 each act as charge relay system in the active site.

This sequence belongs to the peptidase S9C family.

It is found in the secreted. Its subcellular location is the cytoplasm. It localises to the nucleus. In Schizosaccharomyces pombe (strain 972 / ATCC 24843) (Fission yeast), this protein is Dipeptidyl-peptidase 5.